The primary structure comprises 34 residues: MEVNILGLMAVALFILIPTSFLLILYVKTASSSD.

The helical transmembrane segment at 5–25 (ILGLMAVALFILIPTSFLLIL) threads the bilayer.

Belongs to the PsbM family. As to quaternary structure, PSII is composed of 1 copy each of membrane proteins PsbA, PsbB, PsbC, PsbD, PsbE, PsbF, PsbH, PsbI, PsbJ, PsbK, PsbL, PsbM, PsbT, PsbX, PsbY, PsbZ, Psb30/Ycf12, at least 3 peripheral proteins of the oxygen-evolving complex and a large number of cofactors. It forms dimeric complexes.

The protein resides in the plastid. The protein localises to the chloroplast thylakoid membrane. Functionally, one of the components of the core complex of photosystem II (PSII). PSII is a light-driven water:plastoquinone oxidoreductase that uses light energy to abstract electrons from H(2)O, generating O(2) and a proton gradient subsequently used for ATP formation. It consists of a core antenna complex that captures photons, and an electron transfer chain that converts photonic excitation into a charge separation. This subunit is found at the monomer-monomer interface. This Tupiella akineta (Green alga) protein is Photosystem II reaction center protein M.